The primary structure comprises 598 residues: MSFMRGGSECSTGRNPLSQFTKHTAEDRSLQHDRVAGPSGGRVGGMRSNTGEMSQQDREMMARFGAAGPEQSSFNYEQMRHELHNMGAQGGQIPQVPSQQGAANGGQWARDFGGQQTAPGAAPQDAKNWNAEFQRGGSPAEAMQQQGPGPMQGGMGMGGMPMYGMARPMYSGMSANMAPQFQPQQANARVVELDEQNWEEQFKQMDSAVGKGKEVEEQTAETATATETVTETETTTEDKPMDIKNMDFENIWKNLQVNVLDNMDEWLEETNSPAWERDFHEYTHNRPEFADYQFEENNQFMEHPDPFKIGVELMETGGRLSEAALAFEAAVQKNTEHAEAWGRLGACQAQNEKEDPAIRALERCIKLEPGNLSALMNLSVSYTNEGYENAAYATLERWLATKYPEVVDQARNQEPRLGNEDKFQLHSRVTELFIRAAQLSPDGANIDADVQVGLGVLFYGNEEYDKAIDCFNAAIAVRPDDALLWNRLGATLANSHRSEEAIDAYYKALELRPSFVRARYNLGVSCINIGCYKEAAQYLLGALSMHKVEGVQDDVLANQSTNLYDTLKRVFLGMDRRDLVAKVGNGMDVNQFRNEFEF.

Disordered regions lie at residues methionine 1–serine 54, arginine 135–glycine 154, and alanine 208–glutamate 237. The span at glutamate 9–lysine 22 shows a compositional bias: polar residues. A Glycyl cysteine thioester (Cys-Gly) (interchain with G-Cter in ubiquitin) cross-link involves residue cysteine 10. Lysine 22 participates in a covalent cross-link: Glycyl lysine isopeptide (Lys-Gly) (interchain with G-Cter in ubiquitin). Residues histidine 23–valine 35 show a composition bias toward basic and acidic residues. The segment covering alanine 220 to glutamate 233 has biased composition (low complexity). 7 TPR repeats span residues proline 304–histidine 337, alanine 338–asparagine 371, leucine 372–glutamine 409, alanine 410–aspartate 447, alanine 448–aspartate 481, alanine 482–phenylalanine 515, and valine 516–glutamate 549.

This sequence belongs to the peroxisomal targeting signal receptor family. Post-translationally, ubiquitination at Cys-10 is UBC4-independent but requires the presence of PEX4. Ubiquitination at Lys-22 is UBC4-dependent.

It is found in the cytoplasm. Its subcellular location is the peroxisome membrane. Its function is as follows. Binds to the C-terminal PTS1-type tripeptide peroxisomal targeting signal (SKL-type) and plays an essential role in peroxisomal protein import. The sequence is that of Peroxisomal targeting signal receptor (PAY32) from Yarrowia lipolytica (strain CLIB 122 / E 150) (Yeast).